The chain runs to 162 residues: uncharacterized protein (162 aa).

Residues 1–19 (MARVYILFFSVFFVFPLFS) form the signal peptide. Transmembrane regions (helical) follow at residues 53 to 75 (LSIGAFPIVTLLSFITYDIIRLI) and 105 to 127 (IVFGVAVGISVTIGLIDVTYRAV).

Its subcellular location is the cell membrane. This is an uncharacterized protein from Treponema pallidum (strain Nichols).